The sequence spans 200 residues: Thymidine kinase (200 aa).

ATP-binding positions include G15–S22 and D88–Q91. The active-site Proton acceptor is E89. Zn(2+)-binding residues include C145, C148, C183, and H186.

The protein belongs to the thymidine kinase family. Homotetramer.

The protein resides in the cytoplasm. It carries out the reaction thymidine + ATP = dTMP + ADP + H(+). This chain is Thymidine kinase, found in Bacillus pumilus (strain SAFR-032).